The sequence spans 142 residues: Putative pre-16S rRNA nuclease (142 aa).

This sequence belongs to the YqgF nuclease family.

The protein resides in the cytoplasm. Could be a nuclease involved in processing of the 5'-end of pre-16S rRNA. The polypeptide is Putative pre-16S rRNA nuclease (Shouchella clausii (strain KSM-K16) (Alkalihalobacillus clausii)).